The sequence spans 145 residues: Ribosome-binding factor A (145 aa).

Over residues 1–10 (MKRPSSHGRR) the composition is skewed to basic residues. 2 disordered regions span residues 1–21 (MKRPSSHGRRPPQGPSQRQLR) and 124–145 (DDPKVRQDLTPQPPSDSWKDED).

This sequence belongs to the RbfA family. Monomer. Binds 30S ribosomal subunits, but not 50S ribosomal subunits or 70S ribosomes.

The protein localises to the cytoplasm. In terms of biological role, one of several proteins that assist in the late maturation steps of the functional core of the 30S ribosomal subunit. Associates with free 30S ribosomal subunits (but not with 30S subunits that are part of 70S ribosomes or polysomes). Required for efficient processing of 16S rRNA. May interact with the 5'-terminal helix region of 16S rRNA. This is Ribosome-binding factor A from Phenylobacterium zucineum (strain HLK1).